A 95-amino-acid polypeptide reads, in one-letter code: Corticostatin-3 (95 aa).

The N-terminal stretch at 1 to 19 (MRTLALLAAILLVALQAQA) is a signal peptide. A propeptide spanning residues 20–62 (EHVSVSIDEVVDQQPPQAEDQDVAIYVKEHESSALEALGVKAG) is cleaved from the precursor. Cystine bridges form between cysteine 65-cysteine 93, cysteine 67-cysteine 82, and cysteine 72-cysteine 92.

The protein belongs to the alpha-defensin family.

Its subcellular location is the secreted. This peptide has antibiotic, anti-fungi and antiviral activity. It also inhibits corticotropin (ACTH) stimulated corticosterone production. The sequence is that of Corticostatin-3 from Oryctolagus cuniculus (Rabbit).